A 328-amino-acid chain; its full sequence is D-cysteine desulfhydrase (328 aa).

Lys51 is modified (N6-(pyridoxal phosphate)lysine).

It belongs to the ACC deaminase/D-cysteine desulfhydrase family. Homodimer. Pyridoxal 5'-phosphate is required as a cofactor.

The catalysed reaction is D-cysteine + H2O = hydrogen sulfide + pyruvate + NH4(+) + H(+). Catalyzes the alpha,beta-elimination reaction of D-cysteine and of several D-cysteine derivatives. It could be a defense mechanism against D-cysteine. In Salmonella schwarzengrund (strain CVM19633), this protein is D-cysteine desulfhydrase.